We begin with the raw amino-acid sequence, 595 residues long: Aspartate--tRNA(Asp/Asn) ligase (595 aa).

Position 175 (Glu175) interacts with L-aspartate. Residues 199 to 202 are aspartate; the sequence is QQYK. 2 residues coordinate L-aspartate: Arg221 and His454. 221–223 is a binding site for ATP; that stretch reads RDE. Glu488 serves as a coordination point for ATP. Arg495 contacts L-aspartate. Residue 540-543 coordinates ATP; sequence GIDR.

It belongs to the class-II aminoacyl-tRNA synthetase family. Type 1 subfamily. As to quaternary structure, homodimer.

The protein localises to the cytoplasm. It catalyses the reaction tRNA(Asx) + L-aspartate + ATP = L-aspartyl-tRNA(Asx) + AMP + diphosphate. Its function is as follows. Aspartyl-tRNA synthetase with relaxed tRNA specificity since it is able to aspartylate not only its cognate tRNA(Asp) but also tRNA(Asn). Reaction proceeds in two steps: L-aspartate is first activated by ATP to form Asp-AMP and then transferred to the acceptor end of tRNA(Asp/Asn). The chain is Aspartate--tRNA(Asp/Asn) ligase from Sinorhizobium fredii (strain NBRC 101917 / NGR234).